Consider the following 497-residue polypeptide: Probable cytosol aminopeptidase (497 aa).

2 residues coordinate Mn(2+): Lys267 and Asp272. Residue Lys279 is part of the active site. Positions 290, 349, and 351 each coordinate Mn(2+). Arg353 is an active-site residue.

It belongs to the peptidase M17 family. It depends on Mn(2+) as a cofactor.

Its subcellular location is the cytoplasm. The enzyme catalyses Release of an N-terminal amino acid, Xaa-|-Yaa-, in which Xaa is preferably Leu, but may be other amino acids including Pro although not Arg or Lys, and Yaa may be Pro. Amino acid amides and methyl esters are also readily hydrolyzed, but rates on arylamides are exceedingly low.. The catalysed reaction is Release of an N-terminal amino acid, preferentially leucine, but not glutamic or aspartic acids.. Presumably involved in the processing and regular turnover of intracellular proteins. Catalyzes the removal of unsubstituted N-terminal amino acids from various peptides. This is Probable cytosol aminopeptidase from Pseudomonas putida (strain W619).